The following is a 187-amino-acid chain: Ribulose bisphosphate carboxylase small subunit, chloroplastic (187 aa).

The transit peptide at 1–56 directs the protein to the chloroplast; sequence MASSVMSTATVATGANAAQASMIASFNGLKSAASFPVTRKQDLDITSIASNGGRVE.

Belongs to the RuBisCO small chain family. As to quaternary structure, heterohexadecamer of 8 large and 8 small subunits.

The protein localises to the plastid. It localises to the chloroplast. RuBisCO catalyzes two reactions: the carboxylation of D-ribulose 1,5-bisphosphate, the primary event in carbon dioxide fixation, as well as the oxidative fragmentation of the pentose substrate. Both reactions occur simultaneously and in competition at the same active site. Although the small subunit is not catalytic it is essential for maximal activity. In Capsicum annuum (Capsicum pepper), this protein is Ribulose bisphosphate carboxylase small subunit, chloroplastic.